We begin with the raw amino-acid sequence, 482 residues long: tRNA sulfurtransferase (482 aa).

Positions 61-165 (PAIRDALTRI…NDRLLLVKGR (105 aa)) constitute a THUMP domain. ATP is bound by residues 183-184 (LI), Lys-265, Gly-287, and Gln-296. An intrachain disulfide couples Cys-344 to Cys-456. In terms of domain architecture, Rhodanese spans 404–482 (FGANDAILDI…GFSNVKVYRP (79 aa)). Catalysis depends on Cys-456, which acts as the Cysteine persulfide intermediate.

This sequence belongs to the ThiI family.

It localises to the cytoplasm. The enzyme catalyses [ThiI sulfur-carrier protein]-S-sulfanyl-L-cysteine + a uridine in tRNA + 2 reduced [2Fe-2S]-[ferredoxin] + ATP + H(+) = [ThiI sulfur-carrier protein]-L-cysteine + a 4-thiouridine in tRNA + 2 oxidized [2Fe-2S]-[ferredoxin] + AMP + diphosphate. It carries out the reaction [ThiS sulfur-carrier protein]-C-terminal Gly-Gly-AMP + S-sulfanyl-L-cysteinyl-[cysteine desulfurase] + AH2 = [ThiS sulfur-carrier protein]-C-terminal-Gly-aminoethanethioate + L-cysteinyl-[cysteine desulfurase] + A + AMP + 2 H(+). It participates in cofactor biosynthesis; thiamine diphosphate biosynthesis. Its function is as follows. Catalyzes the ATP-dependent transfer of a sulfur to tRNA to produce 4-thiouridine in position 8 of tRNAs, which functions as a near-UV photosensor. Also catalyzes the transfer of sulfur to the sulfur carrier protein ThiS, forming ThiS-thiocarboxylate. This is a step in the synthesis of thiazole, in the thiamine biosynthesis pathway. The sulfur is donated as persulfide by IscS. The sequence is that of tRNA sulfurtransferase from Klebsiella pneumoniae subsp. pneumoniae (strain ATCC 700721 / MGH 78578).